The chain runs to 236 residues: MSYNLTDPYEIARYIKEAKKSTPIKAYIEGDLSNCDFTNIEKFNSGDLYILFGESEEILVIIENNKDKIKNCRIEQDRRKSAIPLLDMLKVNARIEPGAIIRDKVLIGENAVIMMGAVINIGAEIGEGTMVDMNAVVGARGKLGKNVHLGAGAVVAGVLEPPSSDPCTIEDNVLIGANAVILEGIKIGKGSVVAAGSIVTTDVPENVVVAGAPAKIIKEVDVKTKDKTKLLDDLRK.

Belongs to the transferase hexapeptide repeat family. DapH subfamily.

The catalysed reaction is (S)-2,3,4,5-tetrahydrodipicolinate + acetyl-CoA + H2O = L-2-acetamido-6-oxoheptanedioate + CoA. Its pathway is amino-acid biosynthesis; L-lysine biosynthesis via DAP pathway; LL-2,6-diaminopimelate from (S)-tetrahydrodipicolinate (acetylase route): step 1/3. In terms of biological role, catalyzes the transfer of an acetyl group from acetyl-CoA to tetrahydrodipicolinate. This chain is 2,3,4,5-tetrahydropyridine-2,6-dicarboxylate N-acetyltransferase, found in Clostridium botulinum (strain Langeland / NCTC 10281 / Type F).